Here is an 87-residue protein sequence, read N- to C-terminus: MAKGQSLQDPFLNALRRERIPVSIYLVNGIKLQGQIESFDQFVILLKNTVNQMVYKHAISTVVPARPVSHHSGDRPQGDRPQEKSED.

In terms of domain architecture, Sm spans 9–68 (DPFLNALRRERIPVSIYLVNGIKLQGQIESFDQFVILLKNTVNQMVYKHAISTVVPARPV). Residues 65–87 (ARPVSHHSGDRPQGDRPQEKSED) form a disordered region. A compositionally biased stretch (basic and acidic residues) spans 71–87 (HSGDRPQGDRPQEKSED).

It belongs to the Hfq family. Homohexamer.

Its function is as follows. RNA chaperone that binds small regulatory RNA (sRNAs) and mRNAs to facilitate mRNA translational regulation in response to envelope stress, environmental stress and changes in metabolite concentrations. Also binds with high specificity to tRNAs. The polypeptide is RNA-binding protein Hfq (Vibrio parahaemolyticus serotype O3:K6 (strain RIMD 2210633)).